We begin with the raw amino-acid sequence, 144 residues long: MRLNTLSPAEGSKKAGKRLGRGIGSGLGKTGGRGHKGQNSRSGGGVRRGFEGGQMPLYRRLPKFGFTSRKSAITAEIRLSDLAKVEGGVVDLNTLKAANIIGIQIEFAKVILAGEVSTPVTVRGLRVSKGARAAIEAAGGTIEE.

The segment at 1-54 (MRLNTLSPAEGSKKAGKRLGRGIGSGLGKTGGRGHKGQNSRSGGGVRRGFEGGQ) is disordered. The segment covering 21 to 31 (RGIGSGLGKTG) has biased composition (gly residues).

Belongs to the universal ribosomal protein uL15 family. As to quaternary structure, part of the 50S ribosomal subunit.

In terms of biological role, binds to the 23S rRNA. The polypeptide is Large ribosomal subunit protein uL15 (Enterobacter sp. (strain 638)).